A 113-amino-acid chain; its full sequence is MKLKNNLLEKTLELSELFKIYKELLTDKQKQYFELYIDEDLSLSEIADEFNISKTAVYDSISKTSKLLFSLETKLHLKQKQDLLISLINKIETNQIDEKQFIKSLKEVIWWKY.

This sequence belongs to the UPF0122 family.

In terms of biological role, might take part in the signal recognition particle (SRP) pathway. This is inferred from the conservation of its genetic proximity to ftsY/ffh. May be a regulatory protein. The polypeptide is Probable UPF0122 protein (Mycoplasma mycoides).